The sequence spans 1812 residues: Sperm flagellar protein 2 (1812 aa).

The 105-residue stretch at 1–105 (MSEILCHWLN…LLYQLYIALQ (105 aa)) folds into the Calponin-homology (CH) domain. Coiled coils occupy residues 178–260 (LENF…KDLQ) and 374–403 (EERR…EEQA). The span at 618 to 630 (EEKASPVRQESGD) shows a compositional bias: basic and acidic residues. A disordered region spans residues 618–658 (EEKASPVRQESGDRSQNLHNVLSAEGTPETEDETRLSTKKT). 3 coiled-coil regions span residues 724–750 (LNQA…KKSQ), 803–827 (ENIN…DQIQ), and 868–897 (KEMF…KEEF). Residues 879-897 (ENKAKKKSEEKEAEKKEEF) show a composition bias toward basic and acidic residues. Disordered stretches follow at residues 879–1002 (ENKA…KPGS), 1272–1322 (EEKE…APVI), and 1793–1812 (EHIQ…EEKK). Positions 902-913 (ATPPTPPAPPPS) are enriched in pro residues. Composition is skewed to basic and acidic residues over residues 914–929 (EPEK…ERSK), 943–961 (HGNR…ETSP), and 1272–1285 (EEKE…KEKP). The span at 1292 to 1310 (KKVKKEPPKKKREDKKGKG) shows a compositional bias: basic residues. The tract at residues 1317–1669 (ESAPVITVEE…AEKTSSFIDM (353 aa)) is interaction with IFT20.

As to quaternary structure, interacts (via C-terminus) with IFT20. Interacts with DYNC1I2. In terms of tissue distribution, predominantly expressed in ciliated tissues. Mainly expressed in testis, followed by trachea. Also expressed at lower level in lung, kidney and liver.

The protein resides in the cell projection. The protein localises to the cilium. It is found in the flagellum. It localises to the cytoplasm. Its subcellular location is the golgi apparatus. In terms of biological role, required for correct axoneme development in spermatozoa. Important for normal development of the manchette and sperm head morphology. Essential for male fertility. Plays a role in localization of the intraflagellar transport protein IFT20 to the manchette, suggesting function as an adapter for dynein-mediated protein transport during spermatogenesis. Also plays a role in bone growth where it seems to be required for normal osteoblast differentiation. This chain is Sperm flagellar protein 2 (SPEF2), found in Sus scrofa (Pig).